The chain runs to 185 residues: Ribosome-recycling factor (185 aa).

Residues 138–160 (AMDKAVKDGEVGEDEGARGEKEL) are disordered.

It belongs to the RRF family.

It is found in the cytoplasm. In terms of biological role, responsible for the release of ribosomes from messenger RNA at the termination of protein biosynthesis. May increase the efficiency of translation by recycling ribosomes from one round of translation to another. The polypeptide is Ribosome-recycling factor (Micrococcus luteus (strain ATCC 4698 / DSM 20030 / JCM 1464 / CCM 169 / CCUG 5858 / IAM 1056 / NBRC 3333 / NCIMB 9278 / NCTC 2665 / VKM Ac-2230) (Micrococcus lysodeikticus)).